A 127-amino-acid chain; its full sequence is Small ribosomal subunit protein eS8 (127 aa).

It belongs to the eukaryotic ribosomal protein eS8 family. In terms of assembly, part of the 30S ribosomal subunit.

The chain is Small ribosomal subunit protein eS8 from Nanoarchaeum equitans (strain Kin4-M).